Here is a 707-residue protein sequence, read N- to C-terminus: Polyribonucleotide nucleotidyltransferase (707 aa).

2 residues coordinate Mg(2+): Asp-485 and Asp-491. Positions 552–611 constitute a KH domain; the sequence is PRIHTMKINSDKIKDVIGKGGAVIRALTEETGTTIEIEDDGTIKIAATEGAAAKEAIRRI. Residues 621-689 form the S1 motif domain; that stretch reads GRIYTGKVMR…RQGRIRLSMK (69 aa).

This sequence belongs to the polyribonucleotide nucleotidyltransferase family. Component of the RNA degradosome, which is a multiprotein complex involved in RNA processing and mRNA degradation. It depends on Mg(2+) as a cofactor.

Its subcellular location is the cytoplasm. It catalyses the reaction RNA(n+1) + phosphate = RNA(n) + a ribonucleoside 5'-diphosphate. In terms of biological role, involved in mRNA degradation. Catalyzes the phosphorolysis of single-stranded polyribonucleotides processively in the 3'- to 5'-direction. In Photobacterium profundum (strain SS9), this protein is Polyribonucleotide nucleotidyltransferase.